Here is a 242-residue protein sequence, read N- to C-terminus: tRNA pseudouridine synthase A (242 aa).

Residue Asp-51 is the Nucleophile of the active site. Tyr-107 is a substrate binding site.

The protein belongs to the tRNA pseudouridine synthase TruA family. Homodimer.

It carries out the reaction uridine(38/39/40) in tRNA = pseudouridine(38/39/40) in tRNA. In terms of biological role, formation of pseudouridine at positions 38, 39 and 40 in the anticodon stem and loop of transfer RNAs. This is tRNA pseudouridine synthase A from Helicobacter pylori (strain ATCC 700392 / 26695) (Campylobacter pylori).